Consider the following 102-residue polypeptide: Large ribosomal subunit protein bL21 (102 aa).

It belongs to the bacterial ribosomal protein bL21 family. Part of the 50S ribosomal subunit. Contacts protein L20.

Its function is as follows. This protein binds to 23S rRNA in the presence of protein L20. The sequence is that of Large ribosomal subunit protein bL21 from Pseudarthrobacter chlorophenolicus (strain ATCC 700700 / DSM 12829 / CIP 107037 / JCM 12360 / KCTC 9906 / NCIMB 13794 / A6) (Arthrobacter chlorophenolicus).